The chain runs to 228 residues: Large ribosomal subunit protein bL25 (228 aa).

The segment at 1–24 is disordered; the sequence is MATVMELKATARPKSGKGAARAER.

The protein belongs to the bacterial ribosomal protein bL25 family. CTC subfamily. In terms of assembly, part of the 50S ribosomal subunit; part of the 5S rRNA/L5/L18/L25 subcomplex. Contacts the 5S rRNA. Binds to the 5S rRNA independently of L5 and L18.

Functionally, this is one of the proteins that binds to the 5S RNA in the ribosome where it forms part of the central protuberance. The sequence is that of Large ribosomal subunit protein bL25 from Nitrobacter winogradskyi (strain ATCC 25391 / DSM 10237 / CIP 104748 / NCIMB 11846 / Nb-255).